Here is a 339-residue protein sequence, read N- to C-terminus: Uroporphyrinogen decarboxylase (339 aa).

Residues 23–27 (RQAGR), D72, Y147, T202, and H315 each bind substrate.

This sequence belongs to the uroporphyrinogen decarboxylase family. Homodimer.

It is found in the cytoplasm. The catalysed reaction is uroporphyrinogen III + 4 H(+) = coproporphyrinogen III + 4 CO2. Its pathway is porphyrin-containing compound metabolism; protoporphyrin-IX biosynthesis; coproporphyrinogen-III from 5-aminolevulinate: step 4/4. Functionally, catalyzes the decarboxylation of four acetate groups of uroporphyrinogen-III to yield coproporphyrinogen-III. This chain is Uroporphyrinogen decarboxylase, found in Geotalea uraniireducens (strain Rf4) (Geobacter uraniireducens).